Here is a 56-residue protein sequence, read N- to C-terminus: Ovomucoid (56 aa).

The Kazal-like domain occupies 6 to 56 (VDCSEYPKPACTLEYVPICGSDNKTYGNKCNFCNAVVESNGTLTLSHFGKC). Intrachain disulfides connect cysteine 8/cysteine 38, cysteine 16/cysteine 35, and cysteine 24/cysteine 56. Asparagine 45 carries an N-linked (GlcNAc...) asparagine glycan.

The protein resides in the secreted. In Cyrtonyx montezumae (Montezuma quail), this protein is Ovomucoid.